We begin with the raw amino-acid sequence, 22 residues long: Brevinin-1OKd (22 aa).

Lys-22 carries the post-translational modification Lysine amide.

In terms of tissue distribution, expressed by the skin glands.

The protein localises to the secreted. Its function is as follows. Antimicrobial peptide. The chain is Brevinin-1OKd from Nidirana okinavana (Kampira Falls frog).